The primary structure comprises 526 residues: Glucose-6-phosphate isomerase (526 aa).

Catalysis depends on E320, which acts as the Proton donor. Active-site residues include H349 and K453.

The protein belongs to the GPI family.

Its subcellular location is the cytoplasm. The enzyme catalyses alpha-D-glucose 6-phosphate = beta-D-fructose 6-phosphate. The protein operates within carbohydrate biosynthesis; gluconeogenesis. Its pathway is carbohydrate degradation; glycolysis; D-glyceraldehyde 3-phosphate and glycerone phosphate from D-glucose: step 2/4. Its function is as follows. Catalyzes the reversible isomerization of glucose-6-phosphate to fructose-6-phosphate. The sequence is that of Glucose-6-phosphate isomerase from Rippkaea orientalis (strain PCC 8801 / RF-1) (Cyanothece sp. (strain PCC 8801)).